We begin with the raw amino-acid sequence, 422 residues long: Synaptotagmin-2 (422 aa).

Residues 1-43 (MRNIFKRNQEPNVAPATTTATMPLAPVAPADNSTESTGPGESQ) are disordered. At 1-60 (MRNIFKRNQEPNVAPATTTATMPLAPVAPADNSTESTGPGESQEDMFAKLKEKFFNEINK) the chain is on the vesicular side. A compositionally biased stretch (low complexity) spans 14-30 (APATTTATMPLAPVAPA). Over residues 31 to 40 (DNSTESTGPG) the composition is skewed to polar residues. An N-linked (GlcNAc...) asparagine glycan is attached at N32. The chain crosses the membrane as a helical span at residues 61 to 87 (IPLPPWALIAMAVVAGLLLLTCCFCIC). Topologically, residues 88-422 (KKCCCKKKKN…EVDALLGKNK (335 aa)) are cytoplasmic. A disordered region spans residues 102 to 141 (GKGMKNAMNMKDMKGGQDDDDAETGLTEGEGEGEEEKEPE). A compositionally biased stretch (acidic residues) spans 119–139 (DDDDAETGLTEGEGEGEEEKE). A phosphothreonine mark is found at T125 and T128. The phospholipid binding stretch occupies residues 136-382 (EEKEPENLGK…AIGKIFVGSN (247 aa)). C2 domains follow at residues 142–261 (NLGK…EEWR) and 273–406 (KLGD…AQWH). Residues L172, D173, and D179 each contribute to the Ca(2+) site. A Phosphothreonine modification is found at T202. Y230 carries the phosphotyrosine modification. Ca(2+) is bound by residues D231, F232, D233, S236, K237, D239, D304, D310, D364, and D366. Residue T386 is modified to Phosphothreonine.

Belongs to the synaptotagmin family. Homotetramer. Heterodimer; heterodimerizes with SYT1 in presence of calcium. Interacts with SCAMP5. Interacts with STON2. Interacts with PRRT2. In terms of assembly, (Microbial infection) Interacts with C.botulinum neurotoxin type B (BoNT/B, botB). As to quaternary structure, (Microbial infection) Interacts with C.botulinum neurotoxin type G (BoNT/G, botG). The cofactor is Ca(2+). In terms of processing, phosphorylation at Thr-202 by WNK1, changes the calcium requirement for SYT2-binding to phospholipid membranes.

It is found in the cytoplasmic vesicle. The protein resides in the secretory vesicle. The protein localises to the synaptic vesicle membrane. Its subcellular location is the chromaffin granule membrane. It localises to the cytoplasm. Exhibits calcium-dependent phospholipid and inositol polyphosphate binding properties. May have a regulatory role in the membrane interactions during trafficking of synaptic vesicles at the active zone of the synapse. Plays a role in dendrite formation by melanocytes. Its function is as follows. (Microbial infection) Receptor for C.botulinum neurotoxin type B (BoNT/B, botB); interaction is improved in the presence of gangliosides. The toxin binds via the vesicular domain (residues 47-60). In terms of biological role, (Microbial infection) Receptor for C.botulinum neurotoxin type G (BoNT/G, botG); gangliosides are not required for (or only very slightly improve) binding to a membrane-anchored receptor fragment. The toxin binds via the vesicular domain (residues 47-55). The protein is Synaptotagmin-2 of Mus musculus (Mouse).